Here is a 580-residue protein sequence, read N- to C-terminus: Peptidyl-prolyl cis-trans isomerase-like 2 (580 aa).

A U-box domain is found at 42-115 (KRLPFRFCSL…GEYIDPVTYK (74 aa)). Disordered regions lie at residues 182–201 (IKEGESGLSDEQLREREDPS), 227–259 (QERAQKAGNAASTPVAKTDAPVKSAQKTASYQS), 439–459 (SPTLNKLETHPVNPTTNRPTP), 479–530 (QKKQ…SSTT), and 553–580 (FVDEEPTSEPAKKKFKGIGGFGDFSSWD). One can recognise a PPIase cyclophilin-type domain in the interval 309–468 (QKGYARISTT…PDIRIVDVTI (160 aa)). The segment covering 439-457 (SPTLNKLETHPVNPTTNRP) has biased composition (polar residues). Over residues 490–507 (EANRTAENDEEGSRRAED) the composition is skewed to basic and acidic residues.

The protein belongs to the cyclophilin-type PPIase family. PPIL2 subfamily.

The protein resides in the nucleus. It carries out the reaction [protein]-peptidylproline (omega=180) = [protein]-peptidylproline (omega=0). The enzyme catalyses S-ubiquitinyl-[E2 ubiquitin-conjugating enzyme]-L-cysteine + [acceptor protein]-L-lysine = [E2 ubiquitin-conjugating enzyme]-L-cysteine + N(6)-ubiquitinyl-[acceptor protein]-L-lysine.. Its pathway is protein modification; protein ubiquitination. May catalyze the cis-trans isomerization of proline imidic peptide bonds in oligopeptides thereby assisting the folding of proteins. May also function as a chaperone, playing a role in intracellular transport of proteins. May also have a protein ubiquitin ligase activity acting as an E3 ubiquitin protein ligase or as a ubiquitin-ubiquitin ligase promoting elongation of ubiquitin chains on proteins. This chain is Peptidyl-prolyl cis-trans isomerase-like 2 (cyp8), found in Emericella nidulans (strain FGSC A4 / ATCC 38163 / CBS 112.46 / NRRL 194 / M139) (Aspergillus nidulans).